A 462-amino-acid polypeptide reads, in one-letter code: Sensor histidine kinase RegB (462 aa).

The Cytoplasmic segment spans residues 1 to 25 (MILGPDGILNRDTRGDWVRLRTLIL). Residues 26–45 (LRWMAVAGQLAAIVVTDWYL) traverse the membrane as a helical segment. Topologically, residues 46–51 (GVRLPM) are extracellular. The helical transmembrane segment at 52-70 (GLCFMAVGASVIANVIATF) threads the bilayer. Topologically, residues 71-78 (VFPQNRRL) are cytoplasmic. Residues 79-96 (TEFQALMILLFDLTQLSF) form a helical membrane-spanning segment. Residues 97 to 103 (LLFLTGG) are Extracellular-facing. The chain crosses the membrane as a helical span at residues 104 to 123 (LTNPFALLILAPVTISALAL). Topologically, residues 124 to 129 (ELRTTV) are cytoplasmic. The helical transmembrane segment at 130-149 (ILGAIAIGLLTFTAYFHLPL) threads the bilayer. Residues 150–164 (ILADGSSLSVPRMFE) are Extracellular-facing. A helical membrane pass occupies residues 165 to 182 (FGFWLAIVIGILFLGLYS). Topologically, residues 183-462 (RRVAIEIRSM…PLGENVLIQT (280 aa)) are cytoplasmic. Positions 218–445 (AAAHELGTPL…IVEVIWPVDR (228 aa)) constitute a Histidine kinase domain. His221 is modified (phosphohistidine; by autocatalysis).

It localises to the cell inner membrane. It carries out the reaction ATP + protein L-histidine = ADP + protein N-phospho-L-histidine.. Member of the two-component regulatory system RegB/RegA. Involved in the positive regulation of photosynthesis gene expression in response to anaerobiosis. Also involved in positive regulation of the cbbI and cbbII Calvin cycle CO2 fixation operons, as well as in regulation of expression of genes involved in alternative CO2 fixation pathways. Phosphorylates RegA/PrrA. This chain is Sensor histidine kinase RegB (regB), found in Cereibacter sphaeroides (strain ATCC 17023 / DSM 158 / JCM 6121 / CCUG 31486 / LMG 2827 / NBRC 12203 / NCIMB 8253 / ATH 2.4.1.) (Rhodobacter sphaeroides).